The following is a 127-amino-acid chain: Aspartate 1-decarboxylase (127 aa).

S25 (schiff-base intermediate with substrate; via pyruvic acid) is an active-site residue. Position 25 is a pyruvic acid (Ser) (S25). Residue T57 coordinates substrate. The Proton donor role is filled by Y58. 73–75 (GAA) is a binding site for substrate.

It belongs to the PanD family. As to quaternary structure, heterooctamer of four alpha and four beta subunits. It depends on pyruvate as a cofactor. Post-translationally, is synthesized initially as an inactive proenzyme, which is activated by self-cleavage at a specific serine bond to produce a beta-subunit with a hydroxyl group at its C-terminus and an alpha-subunit with a pyruvoyl group at its N-terminus.

It is found in the cytoplasm. The catalysed reaction is L-aspartate + H(+) = beta-alanine + CO2. Its pathway is cofactor biosynthesis; (R)-pantothenate biosynthesis; beta-alanine from L-aspartate: step 1/1. Functionally, catalyzes the pyruvoyl-dependent decarboxylation of aspartate to produce beta-alanine. The sequence is that of Aspartate 1-decarboxylase from Bacillus cereus (strain 03BB102).